Here is a 546-residue protein sequence, read N- to C-terminus: uncharacterized protein (546 aa).

5 helical membrane-spanning segments follow: residues 4-23 (ILLENPLLVLFLVAAIGYPL), 30-47 (GSSLGVAAVLFVGLAMGS), 57-79 (IVYVLGLALFVYTIGLSSGPAFV), 91-113 (ALIIGMLLVAAGLVVGAQRLLGF), and 155-177 (PVVGYSVAYPMGVMGVVLAISLV). RCK C-terminal domains follow at residues 189-274 (GKRL…FLGE) and 275-359 (VSEE…FFGD). A run of 6 helical transmembrane segments spans residues 372–394 (FSLGLALGLLLGIIPIPLPGGIT), 399–421 (FAGGPLIVALILGTIGRSGSMVW), 434–456 (IGLVLFLAGVGTRAGYGFVTTLA), 460–482 (GLAIFAAGAVVTCLTALATLWIG), 489–511 (PMSILIGMVAGLQTQPAVLGYAL), and 521–543 (IGYASVYPVATISKILIVQILLT).

Belongs to the AAE transporter (TC 2.A.81) family.

The protein localises to the cell membrane. This is an uncharacterized protein from Geobacter sulfurreducens (strain ATCC 51573 / DSM 12127 / PCA).